Consider the following 235-residue polypeptide: Large ribosomal subunit protein uL1 (235 aa).

This sequence belongs to the universal ribosomal protein uL1 family. In terms of assembly, part of the 50S ribosomal subunit.

Functionally, binds directly to 23S rRNA. The L1 stalk is quite mobile in the ribosome, and is involved in E site tRNA release. Protein L1 is also a translational repressor protein, it controls the translation of the L11 operon by binding to its mRNA. The polypeptide is Large ribosomal subunit protein uL1 (Prochlorococcus marinus (strain AS9601)).